Consider the following 1683-residue polypeptide: Genome polyprotein (1683 aa).

The Extracellular segment spans residues 1-445 (MRCIGISNRD…LHQVFGAIYG (445 aa)). 4 disulfide bridges follow: Cys-3-Cys-30, Cys-60-Cys-121, Cys-74-Cys-105, and Cys-92-Cys-116. Asn-67 carries an N-linked (GlcNAc...) asparagine; by host glycan. Positions 98 to 111 (DRGWGNGCGLFGKG) are fusion peptide. An N-linked (GlcNAc...) asparagine; by host glycan is attached at Asn-153. Intrachain disulfides connect Cys-185–Cys-285 and Cys-302–Cys-333. Residues 446 to 466 (AAFSGVSWTMKILIGVIITWI) form a helical membrane-spanning segment. The Cytoplasmic portion of the chain corresponds to 467–472 (GMNSRS). The chain crosses the membrane as a helical span at residues 473-493 (TSLSVSLVLVGIVTLYLGVMV). At 494-915 (QADSGCVVSW…MVGATMTDDI (422 aa)) the chain is on the extracellular side. 6 disulfides stabilise this stretch: Cys-499-Cys-510, Cys-550-Cys-638, Cys-674-Cys-718, Cys-775-Cys-824, Cys-786-Cys-808, and Cys-807-Cys-811. Residue Asn-702 is glycosylated (N-linked (GlcNAc...) asparagine; by host). A helical transmembrane segment spans residues 916 to 940 (GMGVTYLALLAAFRVRPTFAAGLLL). Over 941–946 (RKLTSK) the chain is Cytoplasmic. A helical membrane pass occupies residues 947-965 (ELMMTTIGIVLLSQSSIPE). Topologically, residues 966–989 (TILELTDALALGMMVLKMVRNMEK) are lumenal. A helical transmembrane segment spans residues 990 to 1010 (YQLAVTIMAILCVPNAVILQN). Ala-1011 is a topological domain (cytoplasmic). The chain crosses the membrane as a helical span at residues 1012–1030 (WKVSCTILAVVSVSPLLLT). At 1031 to 1037 (SSQQKAD) the chain is on the lumenal side. A helical membrane pass occupies residues 1038–1058 (WIPLALTIKGLNPTAIFLTTL). Residues 1059–1683 (SRTSKKRAGV…EFKEFAAGRK (625 aa)) lie on the Cytoplasmic side of the membrane. In terms of domain architecture, Peptidase S7 spans 1066 to 1243 (AGVLWDVPSP…EKSIEDNPEI (178 aa)). Active-site charge relay system; for serine protease NS3 activity residues include His-1116, Asp-1140, and Ser-1200. Residues 1245–1401 (DDIFRKRRLT…QSNAPIMDEE (157 aa)) enclose the Helicase ATP-binding domain. Residues 1249 to 1252 (RKRR) are important for RNA-binding. Residue 1258-1265 (LHPGAGKT) participates in ATP binding. The short motif at 1349–1352 (DEAH) is the DEAH box element. Residues 1411–1582 (SGHEWVTDFK…IFEPEREKVD (172 aa)) enclose the Helicase C-terminal domain.

Capsid protein C: Homodimer. Interacts (via N-terminus) with host EXOC1 (via C-terminus); this interaction results in EXOC1 degradation through the proteasome degradation pathway. Protein prM: Forms heterodimers with envelope protein E in the endoplasmic reticulum and Golgi. As to quaternary structure, homodimer; in the endoplasmic reticulum and Golgi. Interacts with protein prM. Interacts with non-structural protein 1. In terms of assembly, homodimer; Homohexamer when secreted. Interacts with envelope protein E. Interacts (via N-terminus) with serine protease NS3. Non-structural protein 2B: Forms a heterodimer with serine protease NS3. May form homooligomers. As to quaternary structure, forms a heterodimer with NS2B. Interacts with NS4B. Interacts with unphosphorylated RNA-directed RNA polymerase NS5; this interaction stimulates RNA-directed RNA polymerase NS5 guanylyltransferase activity. Interacts with host SHFL. Specific enzymatic cleavages in vivo yield mature proteins. Cleavages in the lumen of endoplasmic reticulum are performed by host signal peptidase, wereas cleavages in the cytoplasmic side are performed by the Serine protease NS3. Signal cleavage at the 2K-4B site requires a prior NS3 protease-mediated cleavage at the 4A-2K site. In terms of processing, N-glycosylated. The excreted form is glycosylated and this is required for efficient secretion of the protein from infected cells. Post-translationally, N-glycosylated. Specific enzymatic cleavages in vivo yield mature proteins. Cleavages in the lumen of endoplasmic reticulum are performed by host signal peptidase, wereas cleavages in the cytoplasmic side are performed by serine protease NS3. Signal cleavage at the 2K-4B site requires a prior NS3 protease-mediated cleavage at the 4A-2K site.

It is found in the virion membrane. Its subcellular location is the host endoplasmic reticulum membrane. The protein resides in the secreted. The enzyme catalyses Selective hydrolysis of -Xaa-Xaa-|-Yaa- bonds in which each of the Xaa can be either Arg or Lys and Yaa can be either Ser or Ala.. It carries out the reaction a ribonucleoside 5'-triphosphate + H2O = a ribonucleoside 5'-diphosphate + phosphate + H(+). It catalyses the reaction ATP + H2O = ADP + phosphate + H(+). Functionally, binds to host cell surface receptor and mediates fusion between viral and cellular membranes. Envelope protein is synthesized in the endoplasmic reticulum in the form of heterodimer with protein prM. They play a role in virion budding in the ER, and the newly formed immature particle is covered with 60 spikes composed of heterodimer between precursor prM and envelope protein E. The virion is transported to the Golgi apparatus where the low pH causes dissociation of PrM-E heterodimers and formation of E homodimers. prM-E cleavage is inefficient, and many virions are only partially matured. These uncleaved prM would play a role in immune evasion. In terms of biological role, involved in immune evasion, pathogenesis and viral replication. Once cleaved off the polyprotein, is targeted to three destinations: the viral replication cycle, the plasma membrane and the extracellular compartment. Essential for viral replication. Required for formation of the replication complex and recruitment of other non-structural proteins to the ER-derived membrane structures. Excreted as a hexameric lipoparticle that plays a role against host immune response. Antagonizing the complement function. Binds to the host macrophages and dendritic cells. Inhibits signal transduction originating from Toll-like receptor 3 (TLR3). Its function is as follows. Disrupts the host endothelial glycocalyx layer of host pulmonary microvascular endothelial cells, inducing degradation of sialic acid and shedding of heparan sulfate proteoglycans. NS1 induces expression of sialidases, heparanase, and activates cathepsin L, which activates heparanase via enzymatic cleavage. These effects are probably linked to the endothelial hyperpermeability observed in severe dengue disease. Component of the viral RNA replication complex that functions in virion assembly and antagonizes the host immune response. Functionally, serine protease subunit NS2B: Required cofactor for the serine protease function of NS3. May have membrane-destabilizing activity and form viroporins. In terms of biological role, displays three enzymatic activities: serine protease, NTPase and RNA helicase. NS3 serine protease, in association with NS2B, performs its autocleavage and cleaves the polyprotein at dibasic sites in the cytoplasm: C-prM, NS2A-NS2B, NS2B-NS3, NS3-NS4A, NS4A-2K and NS4B-NS5. NS3 RNA helicase binds RNA and unwinds dsRNA in the 3' to 5' direction. This chain is Genome polyprotein, found in Aedimorphus (Red guenon).